We begin with the raw amino-acid sequence, 70 residues long: MQTAYWVMVMMMVWITAPLSEGGKLNDVIRGLVPDDVTPKRILQSLISRRRFDGRALFVPSCIWKTCPYG.

An N-terminal signal peptide occupies residues methionine 1–glycine 22. Residues glycine 23–arginine 55 constitute a propeptide that is removed on maturation. A disulfide bond links cysteine 62 and cysteine 67. At tryptophan 64 the chain carries D-tryptophan. Position 68 is a 4-hydroxyproline (proline 68). Tyrosine 69 is modified (tyrosine amide).

It belongs to the conotoxin C superfamily. Consomatin family. Expressed by the venom duct.

It is found in the secreted. Moderately activates human somatostatin receptors (SSTR) with a preferential activation of SSTR1 and SSTR4. In vivo, does not cause behavioral changes in mice within a few minutes of intracranial injection, but causes a progressive loss of movement thereafter. Four to five hours after injection, mice recover, even with the highest dose tested. Shows antinociception and antihyperalgesia activities in two mouse models of acute pain, most probably by acting outside the central nervous system. In Conus mercator (Trader cone), this protein is Consomatin Mrc3.